We begin with the raw amino-acid sequence, 69 residues long: Microcin H47 immunity protein MchI (69 aa).

Over 1-6 the chain is Cytoplasmic; that stretch reads MSYKKL. The helical transmembrane segment at 7–29 threads the bilayer; it reads YQLTAIFSLPLTILLVSLSSLRI. The Periplasmic portion of the chain corresponds to 30–38; that stretch reads VGEGNSYVD. Residues 39-61 traverse the membrane as a helical segment; that stretch reads VFLSFIIFLGFIELIHGIRKILV. Residues 62 to 69 lie on the Cytoplasmic side of the membrane; it reads WSGWKNGS.

Its subcellular location is the cell membrane. Its function is as follows. Protects a microcin H47-producer cell against microcin H47. The chain is Microcin H47 immunity protein MchI (mchI) from Escherichia coli.